We begin with the raw amino-acid sequence, 309 residues long: Aspartate carbamoyltransferase catalytic subunit (309 aa).

2 residues coordinate carbamoyl phosphate: R55 and T56. Residue K85 coordinates L-aspartate. Positions 106, 135, and 138 each coordinate carbamoyl phosphate. Residues R168 and R230 each coordinate L-aspartate. Carbamoyl phosphate-binding residues include L268 and P269.

It belongs to the aspartate/ornithine carbamoyltransferase superfamily. ATCase family. As to quaternary structure, heterododecamer (2C3:3R2) of six catalytic PyrB chains organized as two trimers (C3), and six regulatory PyrI chains organized as three dimers (R2).

It carries out the reaction carbamoyl phosphate + L-aspartate = N-carbamoyl-L-aspartate + phosphate + H(+). It participates in pyrimidine metabolism; UMP biosynthesis via de novo pathway; (S)-dihydroorotate from bicarbonate: step 2/3. Catalyzes the condensation of carbamoyl phosphate and aspartate to form carbamoyl aspartate and inorganic phosphate, the committed step in the de novo pyrimidine nucleotide biosynthesis pathway. The protein is Aspartate carbamoyltransferase catalytic subunit of Aliivibrio fischeri (strain ATCC 700601 / ES114) (Vibrio fischeri).